Here is an 814-residue protein sequence, read N- to C-terminus: Lon protease 1 (814 aa).

The segment covering 1–17 has biased composition (basic and acidic residues); sequence MTDDRDKTNEDPEKIIE. Positions 1-28 are disordered; sequence MTDDRDKTNEDPEKIIEADFNPEDPDDA. The Lon N-terminal domain occupies 49 to 245; the sequence is LPIIPLRPRP…KVLVLLKKEL (197 aa). 398 to 405 contributes to the ATP binding site; the sequence is GPPGVGKT. A Lon proteolytic domain is found at 633 to 814; the sequence is EDVPGVVTGL…YRDVYQVAFG (182 aa). Active-site residues include serine 721 and lysine 764.

Belongs to the peptidase S16 family. In terms of assembly, homohexamer. Organized in a ring with a central cavity.

The protein resides in the cytoplasm. The catalysed reaction is Hydrolysis of proteins in presence of ATP.. Its function is as follows. ATP-dependent serine protease that mediates the selective degradation of mutant and abnormal proteins as well as certain short-lived regulatory proteins. Required for cellular homeostasis and for survival from DNA damage and developmental changes induced by stress. Degrades polypeptides processively to yield small peptide fragments that are 5 to 10 amino acids long. Binds to DNA in a double-stranded, site-specific manner. In Syntrophotalea carbinolica (strain DSM 2380 / NBRC 103641 / GraBd1) (Pelobacter carbinolicus), this protein is Lon protease 1.